Consider the following 792-residue polypeptide: Ribonucleoside-diphosphate reductase large subunit (792 aa).

Residues Thr-200, 215–216 (SC), Gly-246, 415–419 (NLCAE), and 606–610 (PTAGT) each bind substrate. Cys-216 and Cys-431 are oxidised to a cystine. Asn-415 serves as the catalytic Proton acceptor. Cys-417 serves as the catalytic Cysteine radical intermediate. The active-site Proton acceptor is Glu-419. The tract at residues 758-781 (SPPHSGMKQDGAWLPGPKNPEEES) is disordered.

It belongs to the ribonucleoside diphosphate reductase large chain family. Heterotetramer composed of a homodimer of the large subunit (R1) and a homodimer of the small subunit (R2). Larger multisubunit protein complex are also active, composed of (R1)n(R2)n.

The catalysed reaction is a 2'-deoxyribonucleoside 5'-diphosphate + [thioredoxin]-disulfide + H2O = a ribonucleoside 5'-diphosphate + [thioredoxin]-dithiol. Functionally, ribonucleoside-diphosphate reductase holoenzyme provides the precursors necessary for viral DNA synthesis. Allows virus growth in non-dividing cells, as well as reactivation from latency in infected hosts. Catalyzes the biosynthesis of deoxyribonucleotides from the corresponding ribonucleotides. The protein is Ribonucleoside-diphosphate reductase large subunit of Human herpesvirus 8 type P (isolate GK18) (HHV-8).